The sequence spans 958 residues: Probable transport protein MmpL1 (958 aa).

The next 12 membrane-spanning stretches (helical) occupy residues 19–39, 192–212, 216–236, 252–272, 295–315, 329–349, 377–397, 762–782, 791–811, 814–834, 868–888, and 906–927; these read ALSLPIILFWVALTIVVNVVA, SLHTITGISIAVIAIMLFIAY, SAALIMLLTVGLELLAVRGII, VNVLVALTIAASTDYIIFLVG, TAHVVLASGLTVAGAMYCLGF, AIGLVTVMLASLTLAPAIIAV, WPGPVLAATLLIALIGLLALP, YDVMIAVVASLCLIFIIMLGI, VIVGTVALSLGSAFGLSVLIW, ILHMPLHWLVLPMAIIVMLAV, VVTIAGLVFAFTMGSMVASDL, and TLVVRSYMTPALATLLGRWFWW.

It belongs to the resistance-nodulation-cell division (RND) (TC 2.A.6) family. MmpL subfamily.

Its subcellular location is the cell membrane. The protein is Probable transport protein MmpL1 (mmpL1) of Mycobacterium tuberculosis (strain CDC 1551 / Oshkosh).